The sequence spans 1215 residues: Protein benign gonial cell neoplasm (1215 aa).

The stretch at 407-439 (TGKTAVHFASELNKANHLRLLLFMGADPYIVDL) is one ANK repeat. Phosphothreonine is present on Thr898.

In terms of assembly, part of a complex composed of at least mei-P26, bam, bgcn and Sxl; this complex is involved in translational repression of nanos mRNA. Interacts with bam (via C-terminus); the interaction is direct. Interacts with mei-P26; the interaction is direct and does not require bam. Weakly interacts with wh/wuho; this interaction may be required for the function or formation of the mei-P26-bgcn-bam-Sxl complex. Part of a complex composed of at least tut, bam and bgcn; complex formation does not require RNA. Interacts with tut; the interaction is indirect and is mediated by bam. As part of the bam-bgcn-tut complex associates with twin; may recruit the CCR4-NOT1 deadenylation complex to mRNA 3'UTRs to mediate post-transcriptional regulation of expression. Expressed in testis and in 5-8 germline stem cells of ovaries, immediately adjacent to terminal filament. Expressed in ovarian germline cells throughout the germarium (at protein level).

In terms of biological role, forms a complex with tut and bam involved in 3'UTR-dependent post-transcriptional repression of several 3'-RNA processing factors, which promotes germline stem cell lineage differentiation and mitosis-to-meiosis transition. Part of a complex with bam involved in 3'-UTR-dependent translational repression of a subset of mRNAs, including those for mei-P26, nanos and shg/E-cadherin; may act as a promiscuous RNA-binding protein tethering bam to its target mRNAs. Required for regulating the progression of gonialblast cells through transit amplification and differentiation into gametes. The chain is Protein benign gonial cell neoplasm from Drosophila melanogaster (Fruit fly).